The chain runs to 476 residues: Cytochrome P450 6B5 (476 aa).

Cysteine 443 provides a ligand contact to heme.

Belongs to the cytochrome P450 family. Requires heme as cofactor.

The protein resides in the endoplasmic reticulum membrane. The protein localises to the microsome membrane. The catalysed reaction is an organic molecule + reduced [NADPH--hemoprotein reductase] + O2 = an alcohol + oxidized [NADPH--hemoprotein reductase] + H2O + H(+). Functionally, enables the insect to feed on furanocoumarin-producing plants and evolved as an adaptation for detoxification of xanthotoxin and other furanocoumarins. This chain is Cytochrome P450 6B5 (CYP6B5), found in Papilio glaucus (Eastern tiger swallowtail butterfly).